Reading from the N-terminus, the 354-residue chain is Guanine nucleotide-binding protein G(i) subunit alpha (354 aa).

Residue Gly-2 is the site of N-myristoyl glycine attachment. Cys-3 carries S-palmitoyl cysteine lipidation. Residues 32–354 form the G-alpha domain; it reads REVKLLLLGA…KNNLKDCGLF (323 aa). Residues 35–48 are G1 motif; the sequence is KLLLLGAGESGKST. Residues 40-47, 175-181, 200-204, 269-272, and Ala-326 contribute to the GTP site; these read GAGESGKS, LRTRVKT, DVGGQ, and NKKD. Positions 47 and 181 each coordinate Mg(2+). A G2 motif region spans residues 173–181; that stretch reads DVLRTRVKT. The G3 motif stretch occupies residues 196–205; that stretch reads FKMFDVGGQR. A G4 motif region spans residues 265 to 272; it reads ILFLNKKD. The G5 motif stretch occupies residues 324–329; that stretch reads TCATDT.

Belongs to the G-alpha family. G(i/o/t/z) subfamily. As to quaternary structure, g proteins are composed of 3 units; alpha, beta and gamma. The alpha chain contains the guanine nucleotide binding site.

Guanine nucleotide-binding proteins (G proteins) are involved as modulators or transducers in various transmembrane signaling systems. This G protein is involved in 1-methyladenine-induced oocyte maturation. The chain is Guanine nucleotide-binding protein G(i) subunit alpha from Patiria pectinifera (Starfish).